Consider the following 1021-residue polypeptide: Ribosome quality control complex subunit 2 (1021 aa).

The stretch at 348–388 forms a coiled coil; the sequence is IEAQKLKKRAHDRLATAERRLESAKEDQARKLQSLQDAQAT. Positions 457-484 are disordered; that stretch reads NPESVDNSDESSETSDDDLDDSDDDNKV. Residues 462-480 show a composition bias toward acidic residues; it reads DNSDESSETSDDDLDDSDD. Serine 478 is subject to Phosphoserine. Coiled coils occupy residues 507-546 and 698-727; these read NARK…DLKR and DEKS…LKME. Polar residues-rich tracts occupy residues 746–761 and 839–856; these read YNED…TTGS and ISSQ…TPTA. Disordered regions lie at residues 746–801 and 832–905; these read YNED…TALE and HAAR…VESF. Residues 876 to 905 are compositionally biased toward basic and acidic residues; sequence DQSRNSEAENEKGLSTEQRDEKKHAKVESF.

The protein belongs to the NEMF family. In terms of assembly, component of the ribosome quality control complex (RQC), composed of the E3 ubiquitin ligase rkr1/ltn1, rqc1 and mtr1/rqc2, as well as cdc48 and its ubiquitin-binding cofactors associated with the 60S ribosomal subunit. RQC2 binds to the 40S-binding surface of tRNAs.

Its subcellular location is the cytoplasm. Its function is as follows. Key component of the ribosome quality control complex (RQC), a ribosome-associated complex that mediates the extraction of incompletely synthesized nascent chains from stalled ribosomes as well as their ubiquitin-mediated proteasomal degradation. Thereby, frees 60S subunit ribosomes from the stalled translation complex and prevents the accumulation of nascent polypeptide chains that are potentially toxic for the cell. Within the RQC complex, mtr1/rqc2 specifically binds stalled 60S ribosomal subunits by recognizing an exposed, nascent chain-conjugated tRNA moiety and promotes the recruitment of rkr1/ltn1 to stalled 60S subunits. Following binding to stalled 60S ribosomal subunits, mtr1/rqc2 mediates CAT tailing by recruiting alanine- and threonine-charged tRNA to the A-site and directing the elongation of stalled nascent chains independently of mRNA or 40S subunits, leading to non-templated C-terminal Ala and Thr extensions (CAT tails). CAT tails promote the rkr1/ltn1-mediated ubiquitination of incompletely synthesized nascent polypeptides: CAT tailing facilitates rkr1/ltn1-dependent ubiquitination by exposing lysine residues that would otherwise remain buried in the ribosomal exit tunnel. Following ubiquitination, incompletely synthesized nascent polypeptides are recognized by CDC48 and degraded by the proteasome. CAT-tailed proteins tend to aggregate and sequester chaperones and can induce proteotoxic stress; their rkr1/ltn1-dependent ubiquitination and degradation is required to prevent proteotoxic stress. This is Ribosome quality control complex subunit 2 from Schizosaccharomyces pombe (strain 972 / ATCC 24843) (Fission yeast).